Consider the following 59-residue polypeptide: Large ribosomal subunit protein bL32 (59 aa).

Belongs to the bacterial ribosomal protein bL32 family.

The sequence is that of Large ribosomal subunit protein bL32 from Lactiplantibacillus plantarum (strain ATCC BAA-793 / NCIMB 8826 / WCFS1) (Lactobacillus plantarum).